A 123-amino-acid polypeptide reads, in one-letter code: Ribonuclease P protein component 2 (123 aa).

It belongs to the eukaryotic/archaeal RNase P protein component 2 family. As to quaternary structure, consists of a catalytic RNA component and at least 4-5 protein subunits.

It localises to the cytoplasm. The enzyme catalyses Endonucleolytic cleavage of RNA, removing 5'-extranucleotides from tRNA precursor.. Its function is as follows. Part of ribonuclease P, a protein complex that generates mature tRNA molecules by cleaving their 5'-ends. The sequence is that of Ribonuclease P protein component 2 from Sulfurisphaera tokodaii (strain DSM 16993 / JCM 10545 / NBRC 100140 / 7) (Sulfolobus tokodaii).